Consider the following 540-residue polypeptide: DM7 family protein GM11956 (540 aa).

The segment at 416–443 (ATDTRGRDEIRTSCDQPQEKDEGSAEAD) is disordered. A compositionally biased stretch (basic and acidic residues) spans 417–443 (TDTRGRDEIRTSCDQPQEKDEGSAEAD).

Belongs to the DM7 family.

This chain is DM7 family protein GM11956, found in Drosophila sechellia (Fruit fly).